Reading from the N-terminus, the 251-residue chain is Imidazole glycerol phosphate synthase subunit HisF (251 aa).

Residues aspartate 11 and aspartate 130 contribute to the active site.

This sequence belongs to the HisA/HisF family. In terms of assembly, heterodimer of HisH and HisF.

The protein resides in the cytoplasm. The enzyme catalyses 5-[(5-phospho-1-deoxy-D-ribulos-1-ylimino)methylamino]-1-(5-phospho-beta-D-ribosyl)imidazole-4-carboxamide + L-glutamine = D-erythro-1-(imidazol-4-yl)glycerol 3-phosphate + 5-amino-1-(5-phospho-beta-D-ribosyl)imidazole-4-carboxamide + L-glutamate + H(+). Its pathway is amino-acid biosynthesis; L-histidine biosynthesis; L-histidine from 5-phospho-alpha-D-ribose 1-diphosphate: step 5/9. IGPS catalyzes the conversion of PRFAR and glutamine to IGP, AICAR and glutamate. The HisF subunit catalyzes the cyclization activity that produces IGP and AICAR from PRFAR using the ammonia provided by the HisH subunit. The sequence is that of Imidazole glycerol phosphate synthase subunit HisF from Flavobacterium psychrophilum (strain ATCC 49511 / DSM 21280 / CIP 103535 / JIP02/86).